The sequence spans 202 residues: uncharacterized protein (202 aa).

This is an uncharacterized protein from Pseudanabaena tenuis (strain PCC 7409).